A 426-amino-acid polypeptide reads, in one-letter code: Inhibin beta A chain (426 aa).

Residues 1–20 (MPLLWLRGFLLASCWIIVKS) form the signal peptide. The propeptide occupies 21–310 (SPTPGSEGHS…EDHPHRRRRR (290 aa)). An N-linked (GlcNAc...) asparagine glycan is attached at Asn-165. A compositionally biased stretch (polar residues) spans 177–186 (QQQKHPQGSS). 2 disordered regions span residues 177-201 (QQQKHPQGSSDTREEAEEADLMEER) and 260-291 (KKKKEEEGEGKKKDGGEAGAGVDEEKEQSHRP). Positions 263–275 (KEEEGEGKKKDGG) are enriched in basic and acidic residues. 4 disulfides stabilise this stretch: Cys-314–Cys-322, Cys-321–Cys-391, Cys-350–Cys-423, and Cys-354–Cys-425.

This sequence belongs to the TGF-beta family. Dimeric, linked by one or more disulfide bonds. Inhibin A is a dimer of alpha/INHA and beta-A/INHBA. Activin A is a homodimer of beta-A/INHBA. Activin AB is a dimer of beta-A/INHBA and beta-B/INHBB. Interacts with FST and FSTL3; these interactions prevent activin A interaction to its type II receptor. Activin A interacts with ACVR2A. Activin A interacts with BMPR2. Inhibin A interacts with ACVR1; this interaction creates a non-signaling complex (NSC) that inhibits ACVR1-mediated BMP signaling. Inhibin A interacts with ACVR2A.

It localises to the secreted. Its function is as follows. Inhibins/activins are involved in regulating a number of diverse functions such as hypothalamic and pituitary hormone secretion, gonadal hormone secretion, germ cell development and maturation, erythroid differentiation, insulin secretion, nerve cell survival, embryonic axial development or bone growth, depending on their subunit composition. Activin A is a homodimer of INHBA that plays a role in several essential biological processes including embryonic development, stem cell maintenance and differentiation, haematopoiesis, cell proliferation and tissue fibrosis. Signals through type I (such as ACVR1B or ACVR1C) and type II receptors (such as ACVR2A, ACVR2B or BMPR2) which, upon ligand binding, phosphorylate SMAD2 and SMAD3 intracellular signaling mediators that form a complex with SMAD4, translocate to the nucleus and modulate gene expression. Can also activate alternative non-canonical intracellular signaling pathways including the p38 MAPK, extracellular signal-regulated kinases 1/2 (ERK1/2) and c-Jun N-terminal kinases (JNKs) to modulate cell migration and differentiation. Alternatively, promotes osteoblastic differentiation via ACVRL1-SMAD1/5/9 pathway. In addition, can engage the type I receptor ACVR1 to form an ACVR1-activin A-type II receptor non-signaling complex (NSC) that renders receptors unavailable for engagement with BMPs, hence resulting in an apparent inhibition of ACVR1-mediated BMP signaling. In terms of biological role, inhibin A is a dimer of alpha/INHA and beta-A/INHBA that functions as a feedback regulator in the hypothalamic-pituitary-gonadal (HPG) axis. Inhibits the secretion of FSH from the anterior pituitary gland by acting on pituitary gonadotrope cells. Antagonizes activin A by binding to the proteoglycan, betaglycan, and forming a stable complex with and, thereby, sequestering type II activin receptors while excluding type I receptor. The sequence is that of Inhibin beta A chain (INHBA) from Equus caballus (Horse).